Here is a 206-residue protein sequence, read N- to C-terminus: Inner membrane protein YnjF (206 aa).

Topologically, residues Met1–Ala37 are periplasmic. The helical transmembrane segment at Ile38 to Leu60 threads the bilayer. At Asn61 to Asp79 the chain is on the cytoplasmic side. The chain crosses the membrane as a helical span at residues Ala80–Leu102. Residues Ala103–Ala111 lie on the Periplasmic side of the membrane. Residues Gly112–Ala134 traverse the membrane as a helical segment. Residues Lys135 to Lys146 are Cytoplasmic-facing. The helical transmembrane segment at Ser147–Leu169 threads the bilayer. The Periplasmic segment spans residues Phe170 to Trp173. The chain crosses the membrane as a helical span at residues Phe174–Gly196. Residues Tyr197–Gln206 lie on the Cytoplasmic side of the membrane.

This sequence belongs to the CDP-alcohol phosphatidyltransferase class-I family.

It localises to the cell inner membrane. This is Inner membrane protein YnjF (ynjF) from Escherichia coli (strain K12).